A 221-amino-acid polypeptide reads, in one-letter code: Ribosomal RNA large subunit methyltransferase E (221 aa).

G60, W62, D89, D105, and D134 together coordinate S-adenosyl-L-methionine. The active-site Proton acceptor is the K174.

This sequence belongs to the class I-like SAM-binding methyltransferase superfamily. RNA methyltransferase RlmE family.

It is found in the cytoplasm. It carries out the reaction uridine(2552) in 23S rRNA + S-adenosyl-L-methionine = 2'-O-methyluridine(2552) in 23S rRNA + S-adenosyl-L-homocysteine + H(+). Functionally, specifically methylates the uridine in position 2552 of 23S rRNA at the 2'-O position of the ribose in the fully assembled 50S ribosomal subunit. The polypeptide is Ribosomal RNA large subunit methyltransferase E (Cupriavidus metallidurans (strain ATCC 43123 / DSM 2839 / NBRC 102507 / CH34) (Ralstonia metallidurans)).